The sequence spans 198 residues: Nucleoid occlusion factor SlmA (198 aa).

The region spanning 10 to 70 (NRREEILQSL…SLIEFIEDSL (61 aa)) is the HTH tetR-type domain. Residues 33–52 (TTAKLAASVGVSEAALYRHF) constitute a DNA-binding region (H-T-H motif). Positions 117–144 (EQDRLQGRINQLFERIEAQLRQVLREKR) form a coiled coil.

The protein belongs to the nucleoid occlusion factor SlmA family. As to quaternary structure, homodimer. Interacts with FtsZ.

It is found in the cytoplasm. The protein resides in the nucleoid. In terms of biological role, required for nucleoid occlusion (NO) phenomenon, which prevents Z-ring formation and cell division over the nucleoid. Acts as a DNA-associated cell division inhibitor that binds simultaneously chromosomal DNA and FtsZ, and disrupts the assembly of FtsZ polymers. SlmA-DNA-binding sequences (SBS) are dispersed on non-Ter regions of the chromosome, preventing FtsZ polymerization at these regions. The chain is Nucleoid occlusion factor SlmA from Escherichia coli O45:K1 (strain S88 / ExPEC).